Consider the following 240-residue polypeptide: UDP-2,3-diacylglucosamine hydrolase (240 aa).

Residues D8, H10, D41, N79, and H114 each contribute to the Mn(2+) site. Position 79–80 (79–80) interacts with substrate; the sequence is NR. Substrate contacts are provided by D122, S160, N164, K167, and H195. Residues H195 and H197 each coordinate Mn(2+).

Belongs to the LpxH family. It depends on Mn(2+) as a cofactor.

The protein resides in the cell inner membrane. It carries out the reaction UDP-2-N,3-O-bis[(3R)-3-hydroxytetradecanoyl]-alpha-D-glucosamine + H2O = 2-N,3-O-bis[(3R)-3-hydroxytetradecanoyl]-alpha-D-glucosaminyl 1-phosphate + UMP + 2 H(+). The protein operates within glycolipid biosynthesis; lipid IV(A) biosynthesis; lipid IV(A) from (3R)-3-hydroxytetradecanoyl-[acyl-carrier-protein] and UDP-N-acetyl-alpha-D-glucosamine: step 4/6. Functionally, hydrolyzes the pyrophosphate bond of UDP-2,3-diacylglucosamine to yield 2,3-diacylglucosamine 1-phosphate (lipid X) and UMP by catalyzing the attack of water at the alpha-P atom. Involved in the biosynthesis of lipid A, a phosphorylated glycolipid that anchors the lipopolysaccharide to the outer membrane of the cell. The protein is UDP-2,3-diacylglucosamine hydrolase of Escherichia coli (strain UTI89 / UPEC).